Here is a 557-residue protein sequence, read N- to C-terminus: Dihydroxy-acid dehydratase (557 aa).

Residue Asp78 coordinates Mg(2+). [2Fe-2S] cluster is bound at residue Cys119. 2 residues coordinate Mg(2+): Asp120 and Lys121. Lys121 carries the post-translational modification N6-carboxylysine. Position 192 (Cys192) interacts with [2Fe-2S] cluster. Glu442 serves as a coordination point for Mg(2+). Ser468 functions as the Proton acceptor in the catalytic mechanism.

The protein belongs to the IlvD/Edd family. In terms of assembly, homodimer. The cofactor is [2Fe-2S] cluster. Requires Mg(2+) as cofactor.

The enzyme catalyses (2R)-2,3-dihydroxy-3-methylbutanoate = 3-methyl-2-oxobutanoate + H2O. It carries out the reaction (2R,3R)-2,3-dihydroxy-3-methylpentanoate = (S)-3-methyl-2-oxopentanoate + H2O. The protein operates within amino-acid biosynthesis; L-isoleucine biosynthesis; L-isoleucine from 2-oxobutanoate: step 3/4. It participates in amino-acid biosynthesis; L-valine biosynthesis; L-valine from pyruvate: step 3/4. In terms of biological role, functions in the biosynthesis of branched-chain amino acids. Catalyzes the dehydration of (2R,3R)-2,3-dihydroxy-3-methylpentanoate (2,3-dihydroxy-3-methylvalerate) into 2-oxo-3-methylpentanoate (2-oxo-3-methylvalerate) and of (2R)-2,3-dihydroxy-3-methylbutanoate (2,3-dihydroxyisovalerate) into 2-oxo-3-methylbutanoate (2-oxoisovalerate), the penultimate precursor to L-isoleucine and L-valine, respectively. In Bacillus anthracis (strain A0248), this protein is Dihydroxy-acid dehydratase.